Reading from the N-terminus, the 153-residue chain is Calmodulin-like protein 4 (153 aa).

4 consecutive EF-hand domains span residues D8–S43, P44–Q79, D81–K116, and L117–D152.

The protein belongs to the calmodulin family. Interacts with MYO7B; the interaction mediates the association of CALML4 with the IMAC/intermicrovillar adhesion complex. Interacts with MYO7A.

It localises to the cell projection. It is found in the microvillus. Its function is as follows. As part of the intermicrovillar adhesion complex/IMAC plays a role in epithelial brush border differentiation, controlling microvilli organization and length. Acts as a light chain for MYO7B and is required for efficient targeting of the IMAC to the tips of border brush microvilli. The protein is Calmodulin-like protein 4 (CALML4) of Bos taurus (Bovine).